The following is a 1335-amino-acid chain: Bifunctional autolysin (1335 aa).

The signal sequence occupies residues 1–29 (MAKKFNYKLPSMVALTLFGTAFTAHQANA). 3 disordered regions span residues 51–88 (QAEK…QSTT), 100–262 (NEIS…KYKE), and 514–535 (WGTT…NNKL). Polar residues-rich tracts occupy residues 58 to 88 (EVTQ…QSTT), 100 to 127 (NEIS…VTKN), 143 to 155 (TDTN…QSVA), 176 to 223 (TASQ…NASG), and 244 to 258 (SLNN…TTSY). Residues 303–863 (VSSQKTSSLP…LSTQSTPAPK (561 aa)) form an N-acetylmuramoyl-L-alanine amidase region. A compositionally biased stretch (low complexity) spans 515 to 531 (GTTSTKPSQPSKPSGGT). GW domains are found at residues 533-610 (NKLT…YNTA), 612-686 (APVK…TASK), 700-774 (TVTN…YNTA), 776-850 (SPVK…APSK), 868-943 (STQT…TQNI), 945-1020 (KQTQ…QNST), and 1023-1096 (QSTP…KEKI). The endo-beta-N-acetylglucosaminidase stretch occupies residues 864–1335 (QVKPSTQTVN…GKYFEIPIYK (472 aa)).

This sequence in the N-terminal section; belongs to the N-acetylmuramoyl-L-alanine amidase 2 family. In the C-terminal section; belongs to the glycosyl hydrolase 73 family. Oligomer; forms a ring structure at the cell surface which is important for efficient partitioning of daughter cells after cell division. Undergoes proteolytic processing to generate the two extracellular lytic enzymes, probably at the septal region on the cell surface.

Its subcellular location is the secreted. It carries out the reaction Hydrolyzes the link between N-acetylmuramoyl residues and L-amino acid residues in certain cell-wall glycopeptides.. The catalysed reaction is an N(4)-(oligosaccharide-(1-&gt;3)-[oligosaccharide-(1-&gt;6)]-beta-D-Man-(1-&gt;4)-beta-D-GlcNAc-(1-&gt;4)-alpha-D-GlcNAc)-L-asparaginyl-[protein] + H2O = an oligosaccharide-(1-&gt;3)-[oligosaccharide-(1-&gt;6)]-beta-D-Man-(1-&gt;4)-D-GlcNAc + N(4)-(N-acetyl-beta-D-glucosaminyl)-L-asparaginyl-[protein]. Its function is as follows. Endohydrolysis of the di-N-acetylchitobiosyl unit in high-mannose glycopeptides and glycoproteins containing the -[(Man)5(GlcNAc)2]-Asn structure. One N-acetyl-D-glucosamine residue remains attached to the protein; the rest of the oligosaccharide is released intact. Cleaves the peptidoglycan connecting the daughter cells at the end of the cell division cycle, resulting in the separation of the two newly divided cells. Acts as an autolysin in penicillin-induced lysis. This Staphylococcus epidermidis (strain ATCC 12228 / FDA PCI 1200) protein is Bifunctional autolysin (atl).